Here is a 129-residue protein sequence, read N- to C-terminus: Large ribosomal subunit protein bL17 (129 aa).

Belongs to the bacterial ribosomal protein bL17 family. In terms of assembly, part of the 50S ribosomal subunit. Contacts protein L32.

The protein is Large ribosomal subunit protein bL17 of Serratia proteamaculans (strain 568).